The primary structure comprises 164 residues: 6,7-dimethyl-8-ribityllumazine synthase (164 aa).

Residues Phe24, 62-64 (SFE), and 86-88 (AVI) each bind 5-amino-6-(D-ribitylamino)uracil. 91-92 (QT) lines the (2S)-2-hydroxy-3-oxobutyl phosphate pocket. His94 (proton donor) is an active-site residue. Phe119 serves as a coordination point for 5-amino-6-(D-ribitylamino)uracil. Arg133 is a binding site for (2S)-2-hydroxy-3-oxobutyl phosphate.

It belongs to the DMRL synthase family.

The enzyme catalyses (2S)-2-hydroxy-3-oxobutyl phosphate + 5-amino-6-(D-ribitylamino)uracil = 6,7-dimethyl-8-(1-D-ribityl)lumazine + phosphate + 2 H2O + H(+). Its pathway is cofactor biosynthesis; riboflavin biosynthesis; riboflavin from 2-hydroxy-3-oxobutyl phosphate and 5-amino-6-(D-ribitylamino)uracil: step 1/2. Functionally, catalyzes the formation of 6,7-dimethyl-8-ribityllumazine by condensation of 5-amino-6-(D-ribitylamino)uracil with 3,4-dihydroxy-2-butanone 4-phosphate. This is the penultimate step in the biosynthesis of riboflavin. This is 6,7-dimethyl-8-ribityllumazine synthase from Synechocystis sp. (strain ATCC 27184 / PCC 6803 / Kazusa).